Here is a 967-residue protein sequence, read N- to C-terminus: Nonsense-mediated mRNA decay factor SMG8 (967 aa).

The segment at 627-702 is disordered; the sequence is LNEGEDADAD…SCPESQSVAS (76 aa). Over residues 628 to 639 the composition is skewed to acidic residues; sequence NEGEDADADADS. The segment covering 643-666 has biased composition (low complexity); it reads RSQICSSGQSSRSRSNSSSSDTSS. A compositionally biased stretch (polar residues) spans 686 to 702; it reads ATEALSESCPESQSVAS.

Belongs to the SMG8 family.

Involved in nonsense-mediated decay (NMD) of mRNAs containing premature stop codons. Probable component of kinase complex containing nonC and recruited to stalled ribosomes. The protein is Nonsense-mediated mRNA decay factor SMG8 of Drosophila mojavensis (Fruit fly).